A 133-amino-acid chain; its full sequence is MNDTVTIRTRKFMTNRLLQRKQMVIDVLHPGKATVPKTEIREKLAKMYKTTPDVIFVFGFRTHFGGGKTTGFGMIYDSLDYAKKNEPKHRLARHGLYEKKKTSRKQRKERKNRMKKVRGTAKANVGAGKKPKE.

M1 is modified (N-acetylmethionine). A Phosphothreonine modification is found at T9. K37 participates in a covalent cross-link: Glycyl lysine isopeptide (Lys-Gly) (interchain with G-Cter in SUMO2). Residues 92–133 (ARHGLYEKKKTSRKQRKERKNRMKKVRGTAKANVGAGKKPKE) are disordered. Residues 101–119 (KTSRKQRKERKNRMKKVRG) are compositionally biased toward basic residues.

It belongs to the eukaryotic ribosomal protein eS24 family. As to quaternary structure, component of the small ribosomal subunit. Part of the small subunit (SSU) processome, composed of more than 70 proteins and the RNA chaperone small nucleolar RNA (snoRNA) U3.

The protein resides in the cytoplasm. The protein localises to the nucleus. Its subcellular location is the nucleolus. Functionally, component of the small ribosomal subunit. The ribosome is a large ribonucleoprotein complex responsible for the synthesis of proteins in the cell. Required for processing of pre-rRNA and maturation of 40S ribosomal subunits. Part of the small subunit (SSU) processome, first precursor of the small eukaryotic ribosomal subunit. During the assembly of the SSU processome in the nucleolus, many ribosome biogenesis factors, an RNA chaperone and ribosomal proteins associate with the nascent pre-rRNA and work in concert to generate RNA folding, modifications, rearrangements and cleavage as well as targeted degradation of pre-ribosomal RNA by the RNA exosome. This Oryctolagus cuniculus (Rabbit) protein is Small ribosomal subunit protein eS24 (RPS24).